Reading from the N-terminus, the 360-residue chain is S-adenosylmethionine:tRNA ribosyltransferase-isomerase (360 aa).

This sequence belongs to the QueA family. Monomer.

It localises to the cytoplasm. It carries out the reaction 7-aminomethyl-7-carbaguanosine(34) in tRNA + S-adenosyl-L-methionine = epoxyqueuosine(34) in tRNA + adenine + L-methionine + 2 H(+). It participates in tRNA modification; tRNA-queuosine biosynthesis. Its function is as follows. Transfers and isomerizes the ribose moiety from AdoMet to the 7-aminomethyl group of 7-deazaguanine (preQ1-tRNA) to give epoxyqueuosine (oQ-tRNA). This Rhodopseudomonas palustris (strain ATCC BAA-98 / CGA009) protein is S-adenosylmethionine:tRNA ribosyltransferase-isomerase.